The chain runs to 270 residues: Replication protein A 32 kDa subunit (270 aa).

M1 is subject to N-acetylmethionine. 2 positions are modified to phosphoserine; by PRKDC: S4 and S8. Phosphothreonine; by PRKDC is present on T21. Residues 21-41 (TQSPGGFGSPAPSQAEKKSRA) are disordered. Position 23 is a phosphoserine; by CDK2 (S23). The residue at position 29 (S29) is a Phosphoserine; by CDK1. S33 is subject to Phosphoserine; by PRKDC. Residues K37 and K38 each participate in a glycyl lysine isopeptide (Lys-Gly) (interchain with G-Cter in ubiquitin) cross-link. Positions 74–148 (VTIVGIIRHA…KSLVAFKIMP (75 aa)) form a DNA-binding region, OB. An interaction with RAD52, TIPIN, UNG and XPA region spans residues 187–270 (GMSEAGNFGG…DDHFKSTDAE (84 aa)).

The protein belongs to the replication factor A protein 2 family. In terms of assembly, component of the replication protein A complex (RPA/RP-A), a heterotrimeric complex composed of RPA1, RPA2 and RPA3. Interacts with PRPF19; the PRP19-CDC5L complex is recruited to the sites of DNA repair where it ubiquitinates the replication protein A complex (RPA). Interacts with SERTAD3. Interacts with TIPIN. Interacts with TIMELESS. Interacts with PPP4R2; the interaction is direct, DNA damage-dependent and mediates the recruitment of the PP4 catalytic subunit PPP4C. Interacts (hyperphosphorylated) with RAD51. Interacts with SMARCAL1; the interaction is direct and mediates the recruitment to the RPA complex of SMARCAL1. Interacts with RAD52 and XPA; those interactions are direct and associate RAD52 and XPA to the RPA complex. Interacts with FBH1. Interacts with ETAA1; the interaction is direct and promotes ETAA1 recruitment at stalled replication forks. Interacts with RFWD3. Interacts with DDI2. Interacts (in unphosphorylated form via N-terminus) with EIF4EBP3; the interaction enhances EIF4EBP3-mediated inhibition of EIF4E-mediated mRNA nuclear export. Interacts with BRIP1/FANCJ via the RPA1 subunit; following DNA damage they colocalize in foci in the nucleus. Interacts with nuclear UNG (isoform 2); this interaction mediates UNG recruitment to RPA-coated single-stranded DNA at stalled replication forks. In terms of processing, differentially phosphorylated throughout the cell cycle, becoming phosphorylated at the G1-S transition and dephosphorylated in late mitosis. Mainly phosphorylated at Ser-23 and Ser-29, by cyclin A-CDK2 and cyclin B-CDK1, respectively during DNA replication and mitosis. Dephosphorylation may require the serine/threonine-protein phosphatase 4. Phosphorylation at Ser-23 and Ser-29 is a prerequisite for further phosphorylation. Becomes hyperphosphorylated on additional residues including Ser-4, Ser-8, Thr-21 and Ser-33 in response to DNA damage. Hyperphosphorylation is mediated by ATM, ATR and PRKDC. Primarily recruited to DNA repair nuclear foci as a hypophosphorylated form it undergoes subsequent hyperphosphorylation, catalyzed by ATR. Hyperphosphorylation is required for RAD51 recruitment to chromatin and efficient DNA repair. Phosphorylation at Thr-21 depends upon RFWD3 presence. DNA damage-induced 'Lys-63'-linked polyubiquitination by PRPF19 mediates ATRIP recruitment to the RPA complex at sites of DNA damage and activation of ATR. Ubiquitinated by RFWD3 at stalled replication forks in response to DNA damage: ubiquitination by RFWD3 does not lead to degradation by the proteasome and promotes removal of the RPA complex from stalled replication forks, promoting homologous recombination.

The protein localises to the nucleus. The protein resides in the PML body. Its function is as follows. As part of the heterotrimeric replication protein A complex (RPA/RP-A), binds and stabilizes single-stranded DNA intermediates that form during DNA replication or upon DNA stress. It prevents their reannealing and in parallel, recruits and activates different proteins and complexes involved in DNA metabolism. Thereby, it plays an essential role both in DNA replication and the cellular response to DNA damage. In the cellular response to DNA damage, the RPA complex controls DNA repair and DNA damage checkpoint activation. Through recruitment of ATRIP activates the ATR kinase a master regulator of the DNA damage response. It is required for the recruitment of the DNA double-strand break repair factors RAD51 and RAD52 to chromatin in response to DNA damage. Also recruits to sites of DNA damage proteins like XPA and XPG that are involved in nucleotide excision repair and is required for this mechanism of DNA repair. Also plays a role in base excision repair (BER) probably through interaction with UNG. Also recruits SMARCAL1/HARP, which is involved in replication fork restart, to sites of DNA damage. May also play a role in telomere maintenance. RPA stimulates 5'-3' helicase activity of BRIP1/FANCJ. This is Replication protein A 32 kDa subunit (RPA2) from Homo sapiens (Human).